The following is a 259-amino-acid chain: Beta-glucanase (259 aa).

The signal sequence occupies residues Met-1–Ala-31. The GH16 domain maps to Arg-35–Tyr-255. The active-site Nucleophile is Glu-142. Glu-146 (proton donor) is an active-site residue.

It belongs to the glycosyl hydrolase 16 family.

It catalyses the reaction Hydrolysis of (1-&gt;4)-beta-D-glucosidic linkages in beta-D-glucans containing (1-&gt;3)- and (1-&gt;4)-bonds.. Functionally, hydrolyzes B-glucans containing mixed beta-1,3 and beta-1,4 linkages. In Brevibacillus brevis (Bacillus brevis), this protein is Beta-glucanase (bglBB).